We begin with the raw amino-acid sequence, 177 residues long: Large ribosomal subunit protein bL9 (177 aa).

The segment at 151 to 177 (VEEEPAEEVEAPAETEVAEDAEEATEA) is disordered.

The protein belongs to the bacterial ribosomal protein bL9 family.

In terms of biological role, binds to the 23S rRNA. The chain is Large ribosomal subunit protein bL9 from Maridesulfovibrio salexigens (strain ATCC 14822 / DSM 2638 / NCIMB 8403 / VKM B-1763) (Desulfovibrio salexigens).